A 405-amino-acid chain; its full sequence is Acetate kinase (405 aa).

Asn7 lines the Mg(2+) pocket. An ATP-binding site is contributed by Lys14. A substrate-binding site is contributed by Arg90. Asp147 functions as the Proton donor/acceptor in the catalytic mechanism. Residues 207-211 (HLGNG), 282-284 (DFR), and 331-335 (GVGEN) each bind ATP. Residue Glu384 participates in Mg(2+) binding.

This sequence belongs to the acetokinase family. Homodimer. Mg(2+) serves as cofactor. It depends on Mn(2+) as a cofactor.

It is found in the cytoplasm. It carries out the reaction acetate + ATP = acetyl phosphate + ADP. It functions in the pathway metabolic intermediate biosynthesis; acetyl-CoA biosynthesis; acetyl-CoA from acetate: step 1/2. Its function is as follows. Catalyzes the formation of acetyl phosphate from acetate and ATP. Can also catalyze the reverse reaction. This chain is Acetate kinase, found in Clostridium kluyveri (strain ATCC 8527 / DSM 555 / NBRC 12016 / NCIMB 10680 / K1).